We begin with the raw amino-acid sequence, 146 residues long: uncharacterized protein (146 aa).

This is an uncharacterized protein from Saccharomyces cerevisiae (strain ATCC 204508 / S288c) (Baker's yeast).